Consider the following 360-residue polypeptide: Aminomethyltransferase (360 aa).

The protein belongs to the GcvT family. As to quaternary structure, the glycine cleavage system is composed of four proteins: P, T, L and H.

It carries out the reaction N(6)-[(R)-S(8)-aminomethyldihydrolipoyl]-L-lysyl-[protein] + (6S)-5,6,7,8-tetrahydrofolate = N(6)-[(R)-dihydrolipoyl]-L-lysyl-[protein] + (6R)-5,10-methylene-5,6,7,8-tetrahydrofolate + NH4(+). Functionally, the glycine cleavage system catalyzes the degradation of glycine. This chain is Aminomethyltransferase, found in Pseudomonas syringae pv. tomato (strain ATCC BAA-871 / DC3000).